The chain runs to 308 residues: Probable lipid phosphate phosphatase 4 (308 aa).

The next 6 membrane-spanning stretches (helical) occupy residues 26-46 (WLIL…EPFH), 66-86 (IPMW…FIVY), 93-113 (VYDL…TGVT), 162-182 (SFPS…AWYL), 193-213 (GHVA…LIGI), and 226-246 (VFAG…HFFP). The disordered stretch occupies residues 274 to 308 (MTRTGSRGMLGNDVEPGNSASSPHDRHRESTDSDF). A compositionally biased stretch (basic and acidic residues) spans 296-308 (PHDRHRESTDSDF).

Belongs to the PA-phosphatase related phosphoesterase family.

The protein resides in the membrane. This Arabidopsis thaliana (Mouse-ear cress) protein is Probable lipid phosphate phosphatase 4 (LPP4).